Reading from the N-terminus, the 181-residue chain is ATP-dependent protease subunit HslV (181 aa).

The active site involves Thr7. Na(+) contacts are provided by Gly164, Cys167, and Thr170.

This sequence belongs to the peptidase T1B family. HslV subfamily. A double ring-shaped homohexamer of HslV is capped on each side by a ring-shaped HslU homohexamer. The assembly of the HslU/HslV complex is dependent on binding of ATP.

Its subcellular location is the cytoplasm. The enzyme catalyses ATP-dependent cleavage of peptide bonds with broad specificity.. With respect to regulation, allosterically activated by HslU binding. Functionally, protease subunit of a proteasome-like degradation complex believed to be a general protein degrading machinery. In Shouchella clausii (strain KSM-K16) (Alkalihalobacillus clausii), this protein is ATP-dependent protease subunit HslV.